The primary structure comprises 211 residues: LexA repressor (211 aa).

Positions 35–55 form a DNA-binding region, H-T-H motif; that stretch reads RAEIANFFGFKSANAAEEHLK. Active-site for autocatalytic cleavage activity residues include Ser128 and Lys165.

Belongs to the peptidase S24 family. Homodimer.

It catalyses the reaction Hydrolysis of Ala-|-Gly bond in repressor LexA.. Its function is as follows. Represses a number of genes involved in the response to DNA damage (SOS response), including recA and lexA. In the presence of single-stranded DNA, RecA interacts with LexA causing an autocatalytic cleavage which disrupts the DNA-binding part of LexA, leading to derepression of the SOS regulon and eventually DNA repair. The sequence is that of LexA repressor from Colwellia psychrerythraea (strain 34H / ATCC BAA-681) (Vibrio psychroerythus).